We begin with the raw amino-acid sequence, 841 residues long: GRIP1-associated protein 1 (841 aa).

An N-acetylalanine modification is found at A2. Coiled-coil stretches lie at residues 4–161 (ALSE…YGKE) and 208–641 (EQLQ…NSKS). Disordered stretches follow at residues 532–551 (AEES…KQCR) and 558–580 (LKGK…EERD). 8 positions are modified to phosphoserine: S655, S666, S668, S669, S688, S690, S691, and S692. Positions 681-706 (SSAVPARSLSSSPQAQPPRPAELSDE) are disordered. Residues 682 to 694 (SAVPARSLSSSPQ) are compositionally biased toward low complexity. Coiled coils occupy residues 701–735 (AELS…LEVS) and 785–814 (DENL…KDME).

Interacts with GRIP1, GRIP2 and AMPA receptors. Interacts (via C-terminus) with MAPK8/JNK1 and MAP3K1/MEKK1; the interaction promotes MAP3K1-mediated phosphorylation of MAPK8. Interacts (via N-terminus) with RAB4A (in GTP-bound form). Interacts (via C-terminus) with STX12. Proteolytically cleaved by caspase-3. A minor C-terminal proteolytic fragment of 30 kDa is produced. Proteolytic cleavage is required for JNK signaling activation.

The protein localises to the early endosome membrane. Its subcellular location is the recycling endosome membrane. The protein resides in the cell projection. It localises to the axon. It is found in the dendrite. The protein localises to the synapse. In terms of biological role, regulates the endosomal recycling back to the neuronal plasma membrane, possibly by connecting early and late recycling endosomal domains and promoting segregation of recycling endosomes from early endosomal membranes. Involved in the localization of recycling endosomes to dendritic spines, thereby playing a role in the maintenance of dendritic spine morphology. Required for the activity-induced AMPA receptor recycling to dendrite membranes and for long-term potentiation and synaptic plasticity. Its function is as follows. Functions as a scaffold protein to facilitate MAP3K1/MEKK1-mediated activation of the JNK1 kinase by phosphorylation, possibly by bringing MAP3K1/MEKK1 and JNK1 in close proximity. This is GRIP1-associated protein 1 from Homo sapiens (Human).